The chain runs to 414 residues: Histidine--tRNA ligase (414 aa).

This sequence belongs to the class-II aminoacyl-tRNA synthetase family. In terms of assembly, homodimer.

The protein resides in the cytoplasm. It catalyses the reaction tRNA(His) + L-histidine + ATP = L-histidyl-tRNA(His) + AMP + diphosphate + H(+). This is Histidine--tRNA ligase from Rickettsia conorii (strain ATCC VR-613 / Malish 7).